A 98-amino-acid chain; its full sequence is NADH-ubiquinone oxidoreductase chain 4L (98 aa).

A run of 3 helical transmembrane segments spans residues 2-22 (LSISININLAFAAALLGMLMF), 29-49 (SLLCLEGMMLSMFILSTLIIL), and 61-81 (ILLLVFAACEAAIGLALLVMV).

Belongs to the complex I subunit 4L family. Core subunit of respiratory chain NADH dehydrogenase (Complex I) which is composed of 45 different subunits.

The protein localises to the mitochondrion inner membrane. The catalysed reaction is a ubiquinone + NADH + 5 H(+)(in) = a ubiquinol + NAD(+) + 4 H(+)(out). Functionally, core subunit of the mitochondrial membrane respiratory chain NADH dehydrogenase (Complex I) which catalyzes electron transfer from NADH through the respiratory chain, using ubiquinone as an electron acceptor. Part of the enzyme membrane arm which is embedded in the lipid bilayer and involved in proton translocation. In Microcebus ravelobensis (Golden-brown mouse lemur), this protein is NADH-ubiquinone oxidoreductase chain 4L (MT-ND4L).